Reading from the N-terminus, the 129-residue chain is Large ribosomal subunit protein bL12 (129 aa).

It belongs to the bacterial ribosomal protein bL12 family. As to quaternary structure, homodimer. Part of the ribosomal stalk of the 50S ribosomal subunit. Forms a multimeric L10(L12)X complex, where L10 forms an elongated spine to which 2 to 4 L12 dimers bind in a sequential fashion. Binds GTP-bound translation factors.

Functionally, forms part of the ribosomal stalk which helps the ribosome interact with GTP-bound translation factors. Is thus essential for accurate translation. This Synechococcus sp. (strain CC9605) protein is Large ribosomal subunit protein bL12.